Here is a 399-residue protein sequence, read N- to C-terminus: Pyridinium-3,5-bisthiocarboxylic acid mononucleotide nickel insertion protein (399 aa).

This sequence belongs to the LarC family.

The catalysed reaction is Ni(II)-pyridinium-3,5-bisthiocarboxylate mononucleotide = pyridinium-3,5-bisthiocarboxylate mononucleotide + Ni(2+). In terms of biological role, involved in the biosynthesis of a nickel-pincer cofactor ((SCS)Ni(II) pincer complex). Binds Ni(2+), and functions in nickel delivery to pyridinium-3,5-bisthiocarboxylic acid mononucleotide (P2TMN), to form the mature cofactor. Is thus probably required for the activation of nickel-pincer cofactor-dependent enzymes. The chain is Pyridinium-3,5-bisthiocarboxylic acid mononucleotide nickel insertion protein from Clostridium kluyveri (strain ATCC 8527 / DSM 555 / NBRC 12016 / NCIMB 10680 / K1).